A 210-amino-acid polypeptide reads, in one-letter code: Large ribosomal subunit protein uL4 (210 aa).

The segment covering 41–52 has biased composition (polar residues); sequence QTNARQGTASTK. The segment at 41 to 71 is disordered; sequence QTNARQGTASTKTRAEVRGGGRKPWRQKGTG. The span at 60-71 shows a compositional bias: basic residues; it reads GGRKPWRQKGTG.

It belongs to the universal ribosomal protein uL4 family. In terms of assembly, part of the 50S ribosomal subunit.

Its function is as follows. One of the primary rRNA binding proteins, this protein initially binds near the 5'-end of the 23S rRNA. It is important during the early stages of 50S assembly. It makes multiple contacts with different domains of the 23S rRNA in the assembled 50S subunit and ribosome. Functionally, forms part of the polypeptide exit tunnel. The sequence is that of Large ribosomal subunit protein uL4 from Nostoc sp. (strain PCC 7120 / SAG 25.82 / UTEX 2576).